A 202-amino-acid polypeptide reads, in one-letter code: Ribonuclease HII (202 aa).

Residues 18-202 (TYICGVDEAG…FAPVAKLLKQ (185 aa)) enclose the RNase H type-2 domain. A divalent metal cation contacts are provided by aspartate 24, glutamate 25, and aspartate 116.

It belongs to the RNase HII family. The cofactor is Mn(2+). Mg(2+) is required as a cofactor.

The protein localises to the cytoplasm. It catalyses the reaction Endonucleolytic cleavage to 5'-phosphomonoester.. Endonuclease that specifically degrades the RNA of RNA-DNA hybrids. This Acholeplasma laidlawii (strain PG-8A) protein is Ribonuclease HII.